Here is a 624-residue protein sequence, read N- to C-terminus: Probable potassium transport system protein Kup (624 aa).

12 helical membrane passes run Leu13–Met33, Ile52–Ile72, Trp102–Thr122, Pro139–Ile159, Leu170–Ile190, Phe208–Thr228, Trp249–Leu269, Met291–Phe311, Ile339–Phe359, Ala368–Met388, Thr399–Val419, and Ile421–Thr441.

Belongs to the HAK/KUP transporter (TC 2.A.72) family.

The protein resides in the cell inner membrane. It carries out the reaction K(+)(in) + H(+)(in) = K(+)(out) + H(+)(out). Its function is as follows. Transport of potassium into the cell. Likely operates as a K(+):H(+) symporter. In Thiobacillus denitrificans (strain ATCC 25259 / T1), this protein is Probable potassium transport system protein Kup.